Reading from the N-terminus, the 550-residue chain is Hydroxylamine reductase (550 aa).

4 residues coordinate [2Fe-2S] cluster: Cys-3, Cys-6, Cys-18, and Cys-25. Positions 249, 273, 317, 405, 433, 458, 492, and 494 each coordinate hybrid [4Fe-2O-2S] cluster. Residue Cys-405 is modified to Cysteine persulfide.

It belongs to the HCP family. The cofactor is [2Fe-2S] cluster. Requires hybrid [4Fe-2O-2S] cluster as cofactor.

The protein resides in the cytoplasm. It carries out the reaction A + NH4(+) + H2O = hydroxylamine + AH2 + H(+). Functionally, catalyzes the reduction of hydroxylamine to form NH(3) and H(2)O. The sequence is that of Hydroxylamine reductase from Salmonella typhi.